The primary structure comprises 239 residues: Enolase-phosphatase E1 (239 aa).

Aspartate 13 and glutamate 15 together coordinate Mg(2+). Residues 133-134 (SS) and lysine 170 each bind substrate. A Mg(2+)-binding site is contributed by aspartate 196.

The protein belongs to the HAD-like hydrolase superfamily. MasA/MtnC family. In terms of assembly, monomer. Requires Mg(2+) as cofactor.

It is found in the cytoplasm. The protein localises to the nucleus. It catalyses the reaction 5-methylsulfanyl-2,3-dioxopentyl phosphate + H2O = 1,2-dihydroxy-5-(methylsulfanyl)pent-1-en-3-one + phosphate. It functions in the pathway amino-acid biosynthesis; L-methionine biosynthesis via salvage pathway; L-methionine from S-methyl-5-thio-alpha-D-ribose 1-phosphate: step 3/6. The protein operates within amino-acid biosynthesis; L-methionine biosynthesis via salvage pathway; L-methionine from S-methyl-5-thio-alpha-D-ribose 1-phosphate: step 4/6. Its function is as follows. Bifunctional enzyme that catalyzes the enolization of 2,3-diketo-5-methylthiopentyl-1-phosphate (DK-MTP-1-P) into the intermediate 2-hydroxy-3-keto-5-methylthiopentenyl-1-phosphate (HK-MTPenyl-1-P), which is then dephosphorylated to form the acireductone 1,2-dihydroxy-3-keto-5-methylthiopentene (DHK-MTPene). The polypeptide is Enolase-phosphatase E1 (Chaetomium globosum (strain ATCC 6205 / CBS 148.51 / DSM 1962 / NBRC 6347 / NRRL 1970) (Soil fungus)).